Consider the following 185-residue polypeptide: Elongation factor P (185 aa).

This sequence belongs to the elongation factor P family.

The protein resides in the cytoplasm. The protein operates within protein biosynthesis; polypeptide chain elongation. Involved in peptide bond synthesis. Stimulates efficient translation and peptide-bond synthesis on native or reconstituted 70S ribosomes in vitro. Probably functions indirectly by altering the affinity of the ribosome for aminoacyl-tRNA, thus increasing their reactivity as acceptors for peptidyl transferase. The polypeptide is Elongation factor P (Streptococcus pyogenes serotype M5 (strain Manfredo)).